The following is a 387-amino-acid chain: 3-ketoacyl-CoA thiolase (387 aa).

C91 functions as the Acyl-thioester intermediate in the catalytic mechanism. Residues H343 and C373 each act as proton acceptor in the active site.

This sequence belongs to the thiolase-like superfamily. Thiolase family. In terms of assembly, heterotetramer of two alpha chains (FadB) and two beta chains (FadA).

It localises to the cytoplasm. The catalysed reaction is an acyl-CoA + acetyl-CoA = a 3-oxoacyl-CoA + CoA. The protein operates within lipid metabolism; fatty acid beta-oxidation. Functionally, catalyzes the final step of fatty acid oxidation in which acetyl-CoA is released and the CoA ester of a fatty acid two carbons shorter is formed. In Escherichia coli O9:H4 (strain HS), this protein is 3-ketoacyl-CoA thiolase.